A 336-amino-acid polypeptide reads, in one-letter code: Acetaldehyde dehydrogenase 1 (336 aa).

NAD(+) is bound at residue 32–35 (SGVV). Catalysis depends on cysteine 150, which acts as the Acyl-thioester intermediate. Residue asparagine 309 participates in NAD(+) binding.

Belongs to the acetaldehyde dehydrogenase family.

It catalyses the reaction acetaldehyde + NAD(+) + CoA = acetyl-CoA + NADH + H(+). The polypeptide is Acetaldehyde dehydrogenase 1 (mhpF) (Mycobacterium ulcerans (strain Agy99)).